The sequence spans 2348 residues: MDPDQSIKGTKKADGSPRKRLTKGEAIQTSVSSSAPYPGSGTTAPSESATQELLATQPFSGPSQEKTGQQQKPARRPSIEASVHISQLPQHPLTPAFMSPGKPEHLLEGSTWQLVDPMRPGPSGSFVAPGLHPQSQLLPSHASILPPEELPGIPKVFVPRPSQVSLKPAEEAHKKERKPQKPGKYICQYCSRPCAKPSVLQKHIRSHTGERPYPCGPCGFSFKTKSNLYKHRKSHAHRIKAGLASGSSSEMYPPGLEMERIPGEEFEEPTEGESTDSEEETGAASGPSTDVLPKPKHPLLSSSLYSSGSHGSSQERCSLSQSSTGPSLEDPAPFAEASSEHPLSHKPEDTHTIKQKLALRLSERKKLIEEQTFLSPGSKGSTESGYFSRSESAEQQVSPPNTNAKSYAEIIFGKCGRIGQRTSMLASTSTQPLLPLSSEDKPSLVPLSVPRTQVIEHITKLITINEAVVDTSEIDSVKPRRSSLTRRSSVESPKSSLYRDSLSSHGEKTKQEQSLLSLQHPPSSTHPVPLLRSHSMPSAACTISTHHHTFRGSYSFDDHVADPEVPSRNTPVFTSHPRMLKRQPAIELPLGGEYSSEEPGPSSKDPTSKPSDEPEPKESDLTKKTKKGFKTKGANYECTICGARYKKRDNYEAHKKYYCSELQITKAHSVGAHEVEKTQAEPEPWSQMMHYKLGATLELTPLRKRRKEKSLGDEEEPPAFGSPGPSETAHNRPLGSTKSPAEASKSAPSLEGPTSFQPRTPKPGAGSEPGKERRTMSKEISVIQHTSSFEKSDPPEQPSGLEEDKPPAQFSSPPPAPHGRSAHSLQPRLVRQPNIQVPEILVTEEPDRPDTEPEPPPKEPEKTEEFQWPQRSQTLAQLPAEKLPPKKKRLRLAEMAQSSGESSFESSVPLSRSPSQESSISLSGSSRSASFDREDHGKAEAPGPFSDTRSKTLGSHMLTVPSHHPHAREMRRSASEQSPNVPHSSHMTETRSKSFDYGSLSPTGPSLAVPAAPPPPAAPPERRKCFLVRQASLNRPPEAELEAVPKGKQESSEEPAASKPSTKSSVPQISVGTTQGGPSGGKSQMQDRPPLGSSPPYTEALQVFQPLGTQLPPPASLFSLQQLLPQEQEQSSEFFPTQAMAGLLSSPYSMPPLPPSLFQAPPLPLQPTVLHPSQLHLPQLLPHAADIPFQQPPSFLPMPCPAPSTLSGYFLPLQSQFALQLPGEIESHLPPVKTSLPPLATGPPGPSSSTEYSSDIQLPPVTPQATSPAPTSAPPLALPACPDAMVSLVVPVRIQTHMPSYGSAMYTTLSQILVTQSPGSPASTALTKYEEPSSKSMTVCEADVYEAEPGPSSISKEQNRGYQTPYLRVPERKGTSLSSEGILSLEGCSSTASGSKRVLSPAGSLELTMETQQQKRVKEEEASKADEKLELVSTCSVVLTSTEDRKKTEKPHVGGQGRSRREAETLSSLSSDVSDPKELSPLSHSTLSHGTAPGSEALKEYAQPSSKAHRRGLPPMSVKKEDPKEQTDLPPLAPPSSLPLSDTSPKPAKLQEGTDSKKVLQFPSLHTTTNVSWCYLNYIKPNHIQHADRRSSVYAGWCISLYNPNLPGVSTKAALSLLRSKQKVSKETYTMATAPHPEAGRLVPSNSRKPRMTEVHLPSLVSPESQKDPARVEKEEKQGKAEEGTPTSKRGEPARVKIFEGGYKSNEEYIYVRGRGRGRYVCEECGIRCKKPSMLKKHIRTHTDVRPYVCKHCHFAFKTKGNLTKHMKSKAHSKKCQETGVLEELEAEEGTSDDLHQDSEGQEGAEAVEEHQFSDLEDSDSDSDLDEDEEEEEEEEESQDELSGPCSEAAPPCLPPTLQENSSPVEGPQAPDSTSDEVPQGSSISEATHLTASSCSTPSRGTQGLPRLGLAPLEKDMSSAPSPKATSPRRPWSPSKEAGSRPSLTRKHSLTKNDSSPQQCSPAREAQASVTSTPGPQMGPGRDLGPHLCGSPRLELSCLTPYPIGREAPAGLERATDTGTPRYSPTRRWSLGQAESPPQTVLPGKWALAGPCSPSADKSGLGLGPVPRALLQPVPLPHTLLSRSPETCTSAWRKTESRSPSAGPAPLFPRPFSAPHDFHGHLPSRSEENLFSHLPLHSQLLSRAPCPLIPIGGIQMVQARPGAQPTVLPGPCAAWVSGFSGGGSDLTGAREAQERSRWSPTESPSASVSPVAKVSKFTLSSELEEERTGRGPGRPPDWEPHRAEAPPGPMGTHSPCSPQLPQGHQVAPSWRGLLGSPHTLANLKASSFPPLDRSSSMDCLAETSTYSPPRSRNLSGEPRTRQGSPELLGRGELRTPLFLPKGSGPPSI.

The segment at 1–105 is disordered; sequence MDPDQSIKGT…AFMSPGKPEH (105 aa). Residues 27 to 72 are compositionally biased toward polar residues; sequence IQTSVSSSAPYPGSGTTAPSESATQELLATQPFSGPSQEKTGQQQK. 2 consecutive C2H2-type zinc fingers follow at residues 185–207 and 213–235; these read YICQ…IRSH and YPCG…RKSH. Residues 185-235 are ZAS1; it reads YICQYCSRPCAKPSVLQKHIRSHTGERPYPCGPCGFSFKTKSNLYKHRKSH. A no DNA binding activity or transactivation activity, but complete prevention of TRAF-dependent NF-Kappa-B activation; associates with TRAF2 and JUN region spans residues 204–1055; that stretch reads IRSHTGERPY…KGKQESSEEP (852 aa). 3 disordered regions span residues 239-401, 475-532, and 561-628; these read IKAG…SPPN, DSVK…PLLR, and ADPE…TKKG. Residues 257-280 form an acidic 1 region; sequence EMERIPGEEFEEPTEGESTDSEEE. Residues 264-281 are compositionally biased toward acidic residues; it reads EEFEEPTEGESTDSEEET. Residues 298–323 are compositionally biased toward low complexity; sequence PLLSSSLYSSGSHGSSQERCSLSQSS. Over residues 338-352 the composition is skewed to basic and acidic residues; it reads SSEHPLSHKPEDTHT. Composition is skewed to polar residues over residues 372 to 401 and 485 to 495; these read TFLS…SPPN and TRRSSVESPKS. Composition is skewed to low complexity over residues 513-527 and 589-605; these read QSLL…STHP and PLGG…SSKD. A compositionally biased stretch (basic and acidic residues) spans 606–623; the sequence is PTSKPSDEPEPKESDLTK. The CCHC HIVEP-type zinc-finger motif lies at 633–663; that stretch reads GANYECTICGARYKKRDNYEAHKKYYCSELQ. Disordered stretches follow at residues 692-1098, 1229-1274, 1386-1427, 1441-1555, and 1654-1694; these read KLGA…PPYT, LPPV…TSAP, EGCS…KADE, STED…EGTD, and EVHL…GEPA. Positions 736–749 are enriched in low complexity; sequence STKSPAEASKSAPS. Residues 844 to 865 are acidic 2; the sequence is EEPDRPDTEPEPPPKEPEKTEE. The span at 845-865 shows a compositional bias: basic and acidic residues; it reads EPDRPDTEPEPPPKEPEKTEE. The Nuclear localization signal signature appears at 885-891; that stretch reads PKKKRLR. Positions 893-929 are enriched in low complexity; sequence AEMAQSSGESSFESSVPLSRSPSQESSISLSGSSRSA. Positions 930–939 are enriched in basic and acidic residues; it reads SFDREDHGKA. Polar residues-rich tracts occupy residues 975-985, 1062-1073, and 1247-1256; these read SEQSPNVPHSS, TKSSVPQISVGT, and SSSTEYSSDI. Residues 1409-1433 are a coiled coil; it reads METQQQKRVKEEEASKADEKLELVS. Composition is skewed to basic and acidic residues over residues 1416 to 1427, 1442 to 1452, and 1518 to 1527; these read RVKEEEASKADE, TEDRKKTEKPH, and VKKEDPKEQT. Residues 1538–1547 are compositionally biased toward low complexity; sequence LPLSDTSPKP. Basic and acidic residues predominate over residues 1665–1694; that stretch reads SQKDPARVEKEEKQGKAEEGTPTSKRGEPA. C2H2-type zinc fingers lie at residues 1720 to 1742 and 1748 to 1772; these read YVCE…IRTH and YVCK…SKAH. Residues 1720-1772 are ZAS2; sequence YVCEECGIRCKKPSMLKKHIRTHTDVRPYVCKHCHFAFKTKGNLTKHMKSKAH. An acidic 3 region spans residues 1783–1841; the sequence is EELEAEEGTSDDLHQDSEGQEGAEAVEEHQFSDLEDSDSDSDLDEDEEEEEEEEESQDE. 2 disordered regions span residues 1786–1990 and 2009–2038; these read EAEE…HLCG and PAGL…ESPP. Residues 1815–1840 show a composition bias toward acidic residues; the sequence is DLEDSDSDSDLDEDEEEEEEEEESQD. Residues 1871 to 1902 are compositionally biased toward polar residues; sequence PDSTSDEVPQGSSISEATHLTASSCSTPSRGT. Repeat copies occupy residues 1897 to 1900, 1927 to 1930, 1933 to 1936, 1961 to 1964, and 2024 to 2027. Positions 1952 to 1961 are enriched in polar residues; that stretch reads KNDSSPQQCS. The interval 2053–2148 is 5 X 4 AA tandem repeats of [ST]-P-X-[RK]; that stretch reads SPSADKSGLG…QLLSRAPCPL (96 aa). 2 disordered regions span residues 2184–2265 and 2284–2348; these read SDLT…QGHQ and KASS…PPSI. The segment covering 2203-2216 has biased composition (low complexity); the sequence is SPSASVSPVAKVSK. The segment covering 2293–2314 has biased composition (polar residues); the sequence is RSSSMDCLAETSTYSPPRSRNL.

As to quaternary structure, interacts with TRAF1 and TRAF2 as well as with JUN. Forms a multimeric complex with RUNX2 and E3 ubiquitin ligase WWP1. Post-translationally, phosphorylated on threonine and serine residues. Phosphorylation by cyclin-dependent kinase CDK1 decreases HIVEP3 DNA binding affinity, and by epidermal growth factor receptor kinase increases its DNA binding affinity. As to expression, expressed in macrophages, lymphocytes, brain, thymus, spleen and bone marrow. Expressed in osteoblasts, whole bone and, to a lesser extent, in osteoclasts.

The protein resides in the cytoplasm. The protein localises to the nucleus. Plays a role of transcription factor; binds to recognition signal sequences (Rss heptamer) for somatic recombination of immunoglobulin and T-cell receptor gene segments; Also binds to the kappa-B motif of gene such as S100A4, involved in cell progression and differentiation. Kappa-B motif is a gene regulatory element found in promoters and enhancers of genes involved in immunity, inflammation, and growth and that responds to viral antigens, mitogens, and cytokines. Involvement of HIVEP3 in cell growth is strengthened by the fact that its down-regulation promotes cell cycle progression with ultimate formation of multinucleated giant cells. Strongly inhibits TNF-alpha-induced NF-kappa-B activation; Interferes with nuclear factor NF-kappa-B by several mechanisms: as transcription factor, by competing for Kappa-B motif and by repressing transcription in the nucleus; through a non transcriptional process, by inhibiting nuclear translocation of RELA by association with TRAF2, an adapter molecule in the tumor necrosis factor signaling, which blocks the formation of IKK complex. Interaction with TRAF proteins inhibits both NF-Kappa-B-mediated and c-Jun N-terminal kinase/JNK-mediated responses that include apoptosis and pro-inflammatory cytokine gene expression. Positively regulates the expression of IL2 in T-cell. Essential regulator of adult bone formation. This is Transcription factor HIVEP3 (Hivep3) from Mus musculus (Mouse).